Consider the following 128-residue polypeptide: Small ribosomal subunit protein uS13 (128 aa).

A disordered region spans residues 98 to 128 (VRGQRTRTNARTRKGPRPRIGVKKKGKQAGS). A compositionally biased stretch (basic residues) spans 101 to 128 (QRTRTNARTRKGPRPRIGVKKKGKQAGS).

The protein belongs to the universal ribosomal protein uS13 family. In terms of assembly, part of the 30S ribosomal subunit. Forms a loose heterodimer with protein S19. Forms two bridges to the 50S subunit in the 70S ribosome.

Located at the top of the head of the 30S subunit, it contacts several helices of the 16S rRNA. In the 70S ribosome it contacts the 23S rRNA (bridge B1a) and protein L5 of the 50S subunit (bridge B1b), connecting the 2 subunits; these bridges are implicated in subunit movement. Contacts the tRNAs in the A and P-sites. The polypeptide is Small ribosomal subunit protein uS13 (Thermomicrobium roseum (strain ATCC 27502 / DSM 5159 / P-2)).